The primary structure comprises 274 residues: Sulfur carrier protein FdhD (274 aa).

Cysteine 121 (cysteine persulfide intermediate) is an active-site residue. 258–263 (FSKPGR) is a Mo-bis(molybdopterin guanine dinucleotide) binding site.

It belongs to the FdhD family.

Its subcellular location is the cytoplasm. Its function is as follows. Required for formate dehydrogenase (FDH) activity. Acts as a sulfur carrier protein that transfers sulfur from IscS to the molybdenum cofactor prior to its insertion into FDH. This is Sulfur carrier protein FdhD from Yersinia pestis bv. Antiqua (strain Antiqua).